The chain runs to 247 residues: MyoD family inhibitor domain-containing protein (247 aa).

2 disordered regions span residues 1-67 (MSCA…NPSA) and 80-110 (QLQT…GNGI). The MDFI domain occupies 74 to 247 (QPERLPQLQT…MECCGICFPS (174 aa)). Ser129 and Ser141 each carry phosphoserine.

Belongs to the MDFI family. As to quaternary structure, interacts with HAND1; the interaction sequesters Hand1 into the nucleolus and inhibits its activity. Interacts (via C-terminus) with ZIC2. Interacts (via C-terminus) with AXIN1, the histidine-rich region of CCNT1/cyclin-T and weakly with LEF1. Interacts with CCNT2. Interacts with GATA2. Interacts (via C-terminus) with Piezo channel composed of PIEZO1 or PIEZO2; the interaction prolongs Piezo channel inactivation. Post-translationally, palmitoylated. As to expression, in the embryo, robust expression is detected between 16.5 and 18.5 dpc in lung, kidney, and salivary glands. In the developing cardiovascular system, it is detected in lymphatic and cardiac valves (at protein level).

It is found in the cytoplasm. Its subcellular location is the secreted. Required to control the activity of various transcription factors through their sequestration in the cytoplasm. Retains nuclear Zic proteins ZIC1, ZIC2 and ZIC3 in the cytoplasm and inhibits their transcriptional activation. Modulates the expression from cellular promoters. Binds to the axin complex, resulting in an increase in the level of free beta-catenin. Affects axin-regulation of the WNT and JNK signaling pathways. Involved in the development of lymphatic vessel valves. Required to promote lymphatic endothelial cell migration, in a process that involves down-regulation of integrin beta 1 activation and control of cell adhesion to the extracellular matrix. Regulates the activity of mechanosensitive Piezo channel. The protein is MyoD family inhibitor domain-containing protein of Mus musculus (Mouse).